The sequence spans 77 residues: Acyl carrier protein (77 aa).

Residues 2 to 77 (SAIDKRVKEI…DAIDYITEHT (76 aa)) form the Carrier domain. O-(pantetheine 4'-phosphoryl)serine is present on serine 37.

It belongs to the acyl carrier protein (ACP) family. In terms of processing, 4'-phosphopantetheine is transferred from CoA to a specific serine of apo-ACP by AcpS. This modification is essential for activity because fatty acids are bound in thioester linkage to the sulfhydryl of the prosthetic group.

The protein resides in the cytoplasm. Its pathway is lipid metabolism; fatty acid biosynthesis. In terms of biological role, carrier of the growing fatty acid chain in fatty acid biosynthesis. In Geobacter metallireducens (strain ATCC 53774 / DSM 7210 / GS-15), this protein is Acyl carrier protein.